Here is a 194-residue protein sequence, read N- to C-terminus: Peptidyl-tRNA hydrolase (194 aa).

Tyr-17 lines the tRNA pocket. His-22 acts as the Proton acceptor in catalysis. Tyr-69, Asn-71, and Asn-117 together coordinate tRNA.

Belongs to the PTH family. Monomer.

It localises to the cytoplasm. The enzyme catalyses an N-acyl-L-alpha-aminoacyl-tRNA + H2O = an N-acyl-L-amino acid + a tRNA + H(+). Functionally, hydrolyzes ribosome-free peptidyl-tRNAs (with 1 or more amino acids incorporated), which drop off the ribosome during protein synthesis, or as a result of ribosome stalling. Its function is as follows. Catalyzes the release of premature peptidyl moieties from peptidyl-tRNA molecules trapped in stalled 50S ribosomal subunits, and thus maintains levels of free tRNAs and 50S ribosomes. The chain is Peptidyl-tRNA hydrolase from Paenarthrobacter aurescens (strain TC1).